Here is a 414-residue protein sequence, read N- to C-terminus: Isocitrate dehydrogenase [NADP] cytoplasmic (414 aa).

Ser-2 carries the post-translational modification N-acetylserine. A Phosphotyrosine modification is found at Tyr-42. An NADP(+)-binding site is contributed by 75-77 (TIT). Thr-77 is a binding site for substrate. Lys-81 is modified (N6-acetyllysine). Position 82 (Arg-82) interacts with NADP(+). Substrate is bound by residues 94 to 100 (SPNGTIR) and Arg-109. Residue Lys-126 is modified to N6-succinyllysine. Arg-132 and Lys-212 together coordinate substrate. An N6-acetyllysine mark is found at Lys-224, Lys-233, and Lys-243. Asp-252 contributes to the Mn(2+) binding site. NADP(+) is bound at residue Lys-260. Mn(2+) is bound by residues Asp-275 and Asp-279. 310–315 (GTVTRH) is a binding site for NADP(+). Position 321 is an N6-acetyllysine (Lys-321). Asn-328 contributes to the NADP(+) binding site. Ser-389 is subject to Phosphoserine. Residue Lys-400 is modified to N6-succinyllysine.

The protein belongs to the isocitrate and isopropylmalate dehydrogenases family. As to quaternary structure, homodimer. Mg(2+) serves as cofactor. Mn(2+) is required as a cofactor. Post-translationally, acetylation at Lys-374 dramatically reduces catalytic activity.

It is found in the cytoplasm. It localises to the cytosol. The protein resides in the peroxisome. It carries out the reaction D-threo-isocitrate + NADP(+) = 2-oxoglutarate + CO2 + NADPH. In terms of biological role, catalyzes the NADP(+)-dependent oxidative decarboxylation of isocitrate (D-threo-isocitrate) to 2-ketoglutarate (2-oxoglutarate), which is required by other enzymes such as the phytanoyl-CoA dioxygenase. Plays a critical role in the generation of NADPH, an important cofactor in many biosynthesis pathways. May act as a corneal epithelial crystallin and may be involved in maintaining corneal epithelial transparency. This is Isocitrate dehydrogenase [NADP] cytoplasmic (IDH1) from Homo sapiens (Human).